The following is a 159-amino-acid chain: Ribosomal RNA large subunit methyltransferase H (159 aa).

S-adenosyl-L-methionine-binding positions include L76, G108, and 127–132 (FSKMTF).

The protein belongs to the RNA methyltransferase RlmH family. In terms of assembly, homodimer.

It is found in the cytoplasm. The enzyme catalyses pseudouridine(1915) in 23S rRNA + S-adenosyl-L-methionine = N(3)-methylpseudouridine(1915) in 23S rRNA + S-adenosyl-L-homocysteine + H(+). In terms of biological role, specifically methylates the pseudouridine at position 1915 (m3Psi1915) in 23S rRNA. In Oceanobacillus iheyensis (strain DSM 14371 / CIP 107618 / JCM 11309 / KCTC 3954 / HTE831), this protein is Ribosomal RNA large subunit methyltransferase H.